A 252-amino-acid chain; its full sequence is Type II secretion system protein N (252 aa).

Topologically, residues 1–4 (MKQK) are cytoplasmic. A helical membrane pass occupies residues 5 to 25 (VLIAALFLVAYLGFLLVKLPA). Residues 26–252 (TLVVRHLPLP…RFPLRYQGRI (227 aa)) are Periplasmic-facing.

It belongs to the GSP N family.

The protein resides in the cell inner membrane. Functionally, involved in a type II secretion system (T2SS, formerly general secretion pathway, GSP) for the export of proteins. This chain is Type II secretion system protein N (exeN), found in Aeromonas hydrophila.